The following is a 416-amino-acid chain: Phakinin (416 aa).

The interval 1-48 is disordered; that stretch reads MSKRRVAADLPSGTNSSMPVQRHRVSSLRGTHSPSSLDSPPASRTSAV. Position 2 is an N-acetylserine (Ser2). The head stretch occupies residues 2-115; sequence SKRRVAADLP…HTTVEDLGGC (114 aa). Phosphoserine is present on residues Ser27, Ser33, Ser36, and Ser91. A compositionally biased stretch (polar residues) spans 28–48; it reads LRGTHSPSSLDSPPASRTSAV. In terms of domain architecture, IF rod spans 105 to 416; sequence DHTTVEDLGG…HALLDREENN (312 aa). Coiled-coil stretches lie at residues 116–146, 170–249, and 308–402; these read LVEYMTKVHALEQVSQELETQLRAHLESKAK, LENA…VKVL, and QTQE…LQKD. The tail stretch occupies residues 397–416; that stretch reads SQLQKDVASYHALLDREENN.

It belongs to the intermediate filament family. As to quaternary structure, part of a complex required for lens intermediate filament formation composed of BFSP1, BFSP2 and CRYAA. Found in a complex composed of PPL (via C-terminal linker domain), BFSP1 and BFSP2 in the retinal lens. Within the complex interacts with PPL (via C-terminal linker domain) and with BFSP1. Identified in a complex that contains VIM, EZR, AHNAK, BFSP1, BFSP2, ANK2, PLEC, PRX and spectrin. Interacts with LGSN. Interacts with VIM. In terms of tissue distribution, detected in retina lens fiber cells (at protein level). Also expressed in the lens epithelium, abundantly expressed in the anterior and anterolateral epithelium, less frequently expressed nearer the lens coronal equator (at protein level).

Its subcellular location is the cell membrane. The protein resides in the cytoplasm. It localises to the cytoskeleton. It is found in the cell cortex. In terms of biological role, required for the correct formation of lens intermediate filaments as part of a complex composed of BFSP1, BFSP2 and CRYAA. Plays a role in maintenance of retinal lens optical clarity. This Mus musculus (Mouse) protein is Phakinin (Bfsp2).